The sequence spans 111 residues: Large ribosomal subunit protein eL30 (111 aa).

This sequence belongs to the eukaryotic ribosomal protein eL30 family.

The protein is Large ribosomal subunit protein eL30 (RPL30) of Oryza sativa subsp. japonica (Rice).